We begin with the raw amino-acid sequence, 130 residues long: Small ribosomal subunit protein uS9 (130 aa).

It belongs to the universal ribosomal protein uS9 family.

This chain is Small ribosomal subunit protein uS9, found in Phytoplasma australiense.